The primary structure comprises 397 residues: Heterogeneous nuclear ribonucleoprotein K homolog (397 aa).

Positions 1–41 (MMIKVGAAINGTDSPKAMKREHDNDDGDRTGRHKRPKTDGF) are disordered. The segment covering 16-30 (KAMKREHDNDDGDRT) has biased composition (basic and acidic residues). 2 KH domains span residues 49-111 (KFEV…LKDV) and 124-189 (PCEV…IEEV). Residues 220 to 279 (GGFPGNMPAGGPPNNRGPAPQRGGQGPPGGPRSYGGAITQGGGQRSFEAGDFQQFRGGPG) are disordered. A compositionally biased stretch (low complexity) spans 224–241 (GNMPAGGPPNNRGPAPQR). One can recognise a KH 3 domain in the interval 316 to 379 (VTTAQVTIPS…QQIHSAQYLL (64 aa)).

As to quaternary structure, interacts with alg-1; the interaction is direct and may be strengthened through RNA-protein association. In terms of tissue distribution, expressed in gut, muscle, neuronal and hypodermal tissues. Highly expressed in the germline and oocytes.

It localises to the nucleus. The protein localises to the cytoplasm. Its function is as follows. RNA-binding protein which functions together with alg-1, a component of the miRNA loading complex, to modulate the processing and activity of specific miRNAs such as miR-58 and let-7 to regulate gene expression at the post-transcriptional level during embryonic, hypodermal and neuronal development. Promotes the lsy-6-mediated repression of cog-1 in uterine cells. In embryos, may play a role in the DNA damage response. The chain is Heterogeneous nuclear ribonucleoprotein K homolog from Caenorhabditis elegans.